Here is a 271-residue protein sequence, read N- to C-terminus: Chymotrypsin-like elastase family member 2A (271 aa).

A signal peptide spans 1–16 (MIRTLLLSALVAGALS). Positions 17–30 (CGYPTYEVQHDVSR) are cleaved as a propeptide — activation peptide. Residues 31–269 (VVGGQEASPN…YIDWINSVIA (239 aa)) form the Peptidase S1 domain. Cysteines 60 and 76 form a disulfide. Active-site charge relay system residues include histidine 75 and aspartate 123. 3 disulfides stabilise this stretch: cysteine 157–cysteine 224, cysteine 188–cysteine 204, and cysteine 214–cysteine 245. The active-site Charge relay system is the serine 218.

It belongs to the peptidase S1 family. Elastase subfamily. Interacts with CPA1. Interacts with SERPINA1. As to expression, pancreas.

It localises to the secreted. It catalyses the reaction Preferential cleavage: Leu-|-Xaa, Met-|-Xaa and Phe-|-Xaa. Hydrolyzes elastin.. Functionally, elastase that enhances insulin signaling and might have a physiologic role in cellular glucose metabolism. Circulates in plasma and reduces platelet hyperactivation, triggers both insulin secretion and degradation, and increases insulin sensitivity. The chain is Chymotrypsin-like elastase family member 2A (Cela2a) from Rattus norvegicus (Rat).